Consider the following 370-residue polypeptide: Leucine-rich repeat and transmembrane domain-containing protein 2 (370 aa).

An N-terminal signal peptide occupies residues 1–35; the sequence is MLAPGSSPGQRGRLALQWRQVSWITCWIALYAVEA. The region spanning 36–68 is the LRRNT domain; the sequence is LPTCPFSCKCDSRSLEVDCSGLGLTTVPPDVPA. At 36-310 the chain is on the extracellular side; that stretch reads LPTCPFSCKC…PASVRRAMGT (275 aa). LRR repeat units lie at residues 69–90, 93–114, 117–139, 141–162, and 165–186; these read ATRT…AFAN, SLQR…IFGD, NLTE…LRHS, LLRH…LFDG, and ALRS…TFEP. A glycan (N-linked (GlcNAc...) asparagine) is linked at Asn-90. Residues Asn-117 and Asn-125 are each glycosylated (N-linked (GlcNAc...) asparagine). The region spanning 198-252 is the LRRCT domain; sequence NPWECDCNLREFKHWMEWFSYRGGRLDQLACTLPKELRGKDMRMVPMEMFNYCSQ. N-linked (GlcNAc...) asparagine glycosylation is present at Asn-257. The disordered stretch occupies residues 261–300; it reads GLDIPGPPCTKASPEPAKPKPGAEPEPEPSTACPQKQRHR. Residues 311 to 331 traverse the membrane as a helical segment; the sequence is VIIAGVVCGVVCIMMVVAAAY. Residues 332 to 370 lie on the Cytoplasmic side of the membrane; the sequence is GCIYASLMAKYHRELKKRQPLMGDPEGEHEDQKQISSVA. The interval 351–370 is disordered; it reads PLMGDPEGEHEDQKQISSVA.

The protein resides in the membrane. This is Leucine-rich repeat and transmembrane domain-containing protein 2 (LRTM2) from Homo sapiens (Human).